A 549-amino-acid polypeptide reads, in one-letter code: Cation/acetate symporter ActP (549 aa).

The next 13 membrane-spanning stretches (helical) occupy residues 33–53 (WQAI…TYWA), 77–97 (LAIA…ALVF), 103–123 (GLIY…LIAE), 148–168 (ILSA…QMVG), 183–203 (IAVV…GMLA), 206–226 (WVQI…AFMV), 262–282 (ISAL…PHIL), 303–323 (GFMG…IMLV), 355–375 (LFLG…VAGL), 404–424 (VSKI…VLFE), 428–448 (IAFM…PIIL), 464–484 (GGWL…TIWV), and 493–513 (IFPY…GIWF).

The protein belongs to the sodium:solute symporter (SSF) (TC 2.A.21) family.

It localises to the cell inner membrane. Transports acetate. In Escherichia coli O6:K15:H31 (strain 536 / UPEC), this protein is Cation/acetate symporter ActP.